A 375-amino-acid polypeptide reads, in one-letter code: MADPAQLTVTPSRHEKSLGLLTSKFVSLLQEAEDGVLDLKAAADTLAVRQKRRIYDITNVLEGIGLIEKKSKNSIQWKGVGPGCNTREIADKLIDLKAELADLEQREQELDQQRVWVQQSIKNVTDDVQNTGLAYLNHEDICRCFRGDTLLAIRAPSGTCLEVPVPENTNGQKKFQIHLKSTTGPIEVLLVNKDTSSSAPVVVPVPPPEDLIQAPPAVPSTPQRPALTPQNDIATSPAPTVPHSTISNAESQDCPTGQTFSMENTTSSRLPSIDTCPLQSSASLDNSNDSPDPSTSFQPIKSDLSDVLELPKDMISDFFDQTKECITSDLLEELMSSEVFAPLLRLSPPPGDHDYVYNLDESEGVCDLFDVPINL.

The DNA-binding element occupies 12 to 81 (SRHEKSLGLL…KNSIQWKGVG (70 aa)). The leucine-zipper stretch occupies residues 39–61 (LKAAADTLAVRQKRRIYDITNVL). The DEF box signature appears at 44–81 (DTLAVRQKRRIYDITNVLEGIGLIEKKSKNSIQWKGVG). Residues 82–177 (PGCNTREIAD…NTNGQKKFQI (96 aa)) form a dimerization region. The disordered stretch occupies residues 197 to 300 (SSAPVVVPVP…PDPSTSFQPI (104 aa)). A compositionally biased stretch (polar residues) spans 220–270 (STPQRPALTPQNDIATSPAPTVPHSTISNAESQDCPTGQTFSMENTTSSRL). Residues 280-296 (SSASLDNSNDSPDPSTS) are compositionally biased toward low complexity. The segment at 299-375 (PIKSDLSDVL…CDLFDVPINL (77 aa)) is transactivation.

Belongs to the E2F/DP family. In terms of assembly, component of the drtf1/e2f transcription factor complex. Component of the EDM complex, at least composed of e2f4, e2f5, mcidas and tfdp1.

It localises to the nucleus. In terms of biological role, transcription activator that binds DNA cooperatively with DP proteins through the E2 recognition site, 5'-TTTC[CG]CGC-3' found in the promoter region of a number of genes. Component of the EDM complex, a complex specifically required for multiciliate cell differentiation: the EDM complex binds and activate genes required for centriole biogenesis. Activates genes required for centriole assembly (plk4, cep152) and genes specifically required for motile cilia formation (foxj1). Also promotes the deuterosome pathway of centriole biogenesis by activating expression of deup1, but not its paralog cep63. The polypeptide is Transcription factor E2F4 (Xenopus laevis (African clawed frog)).